The sequence spans 700 residues: Chaperonin CPN60, mitochondrial (700 aa).

The transit peptide at 1–9 (MRMKRIHIL) directs the protein to the mitochondrion. The interval 636-700 (TYKHKLHDDE…SMNDEYNYDE (65 aa)) is disordered. Positions 644–700 (DEDTDEDDEEDEDDEDDEDDLDDDDYDDEDEEDEEDEEDEDDEDDEDSMNDEYNYDE) are enriched in acidic residues.

Belongs to the chaperonin (HSP60) family.

The protein localises to the mitochondrion matrix. Its function is as follows. Implicated in mitochondrial protein import and macromolecular assembly. May facilitate the correct folding of imported proteins. May also prevent misfolding and promote the refolding and proper assembly of unfolded polypeptides generated under stress conditions in the mitochondrial matrix. This Plasmodium falciparum (isolate FCR-3 / Gambia) protein is Chaperonin CPN60, mitochondrial.